The following is a 431-amino-acid chain: Serine hydroxymethyltransferase 1 (431 aa).

(6S)-5,6,7,8-tetrahydrofolate contacts are provided by residues leucine 127 and glycine 131–leucine 133. Lysine 236 is modified (N6-(pyridoxal phosphate)lysine). Glutamate 252 lines the (6S)-5,6,7,8-tetrahydrofolate pocket.

It belongs to the SHMT family. As to quaternary structure, homodimer. Pyridoxal 5'-phosphate is required as a cofactor.

The protein localises to the cytoplasm. The catalysed reaction is (6R)-5,10-methylene-5,6,7,8-tetrahydrofolate + glycine + H2O = (6S)-5,6,7,8-tetrahydrofolate + L-serine. It participates in one-carbon metabolism; tetrahydrofolate interconversion. The protein operates within amino-acid biosynthesis; glycine biosynthesis; glycine from L-serine: step 1/1. In terms of biological role, catalyzes the reversible interconversion of serine and glycine with tetrahydrofolate (THF) serving as the one-carbon carrier. This reaction serves as the major source of one-carbon groups required for the biosynthesis of purines, thymidylate, methionine, and other important biomolecules. Also exhibits THF-independent aldolase activity toward beta-hydroxyamino acids, producing glycine and aldehydes, via a retro-aldol mechanism. This chain is Serine hydroxymethyltransferase 1, found in Rhizobium meliloti (strain 1021) (Ensifer meliloti).